The chain runs to 102 residues: Small ribosomal subunit protein bS6 (102 aa).

This sequence belongs to the bacterial ribosomal protein bS6 family.

Its function is as follows. Binds together with bS18 to 16S ribosomal RNA. The sequence is that of Small ribosomal subunit protein bS6 from Desulfovibrio desulfuricans (strain ATCC 27774 / DSM 6949 / MB).